The chain runs to 526 residues: Cytochrome P450 52A5 (526 aa).

The helical transmembrane segment at 18-38 (WYVIVPLAIIIYKVFDYFYVL) threads the bilayer. C473 serves as a coordination point for heme.

The protein belongs to the cytochrome P450 family. Heme is required as a cofactor.

The protein resides in the membrane. Its function is as follows. Together with an NADPH cytochrome P450 the enzyme system catalyzes the terminal hydroxylation as the first step in the assimilation of alkanes and fatty acids. The protein is Cytochrome P450 52A5 (CYP52A5) of Candida maltosa (Yeast).